The primary structure comprises 200 residues: Peptidyl-tRNA hydrolase (200 aa).

Y16 contacts tRNA. H21 acts as the Proton acceptor in catalysis. TRNA-binding residues include F67, N69, and N115.

Belongs to the PTH family. In terms of assembly, monomer.

The protein resides in the cytoplasm. The enzyme catalyses an N-acyl-L-alpha-aminoacyl-tRNA + H2O = an N-acyl-L-amino acid + a tRNA + H(+). Functionally, hydrolyzes ribosome-free peptidyl-tRNAs (with 1 or more amino acids incorporated), which drop off the ribosome during protein synthesis, or as a result of ribosome stalling. In terms of biological role, catalyzes the release of premature peptidyl moieties from peptidyl-tRNA molecules trapped in stalled 50S ribosomal subunits, and thus maintains levels of free tRNAs and 50S ribosomes. This is Peptidyl-tRNA hydrolase from Prochlorococcus marinus (strain MIT 9312).